Here is a 147-residue protein sequence, read N- to C-terminus: Protein archease (147 aa).

Ca(2+) contacts are provided by Asp17, Asp146, and Val147.

It belongs to the archease family.

In terms of biological role, activates the tRNA-splicing ligase complex by facilitating the enzymatic turnover of catalytic subunit RtcB. Acts by promoting the guanylylation of RtcB, a key intermediate step in tRNA ligation. Can also alter the NTP specificity of RtcB such that ATP, dGTP or ITP is used efficiently. In Pyrobaculum islandicum (strain DSM 4184 / JCM 9189 / GEO3), this protein is Protein archease.